A 43-amino-acid chain; its full sequence is MRQFYQHYFTATAKLCWLRWLSVPQRLTMLEGLMQWDDRNSES.

Acts to promote recovery from glucose-phosphate stress due to intracellular accumulation of glucose-6-phosphate caused by disruption of glycolytic flux or in the presence of (toxic) non-metabolizable glucose phosphate analogs. It may do so by inhibiting the transporter activity for glucose uptake (PtsG) as cells that overexpress this protein do not seem to import glucose although they have nearly wild-type levels of PtsG. In Escherichia coli (strain K12), this protein is Putative inhibitor of glucose uptake transporter SgrT (sgrT).